We begin with the raw amino-acid sequence, 266 residues long: 3-oxoadipate enol-lactonase 1 (266 aa).

Positions 28 to 250 (PAIVFSNSLG…DASHLSNIEQ (223 aa)) constitute an AB hydrolase-1 domain.

It catalyses the reaction (4,5-dihydro-5-oxofuran-2-yl)-acetate + H2O = 3-oxoadipate + H(+). The protein operates within aromatic compound metabolism; beta-ketoadipate pathway; 3-oxoadipate from 5-oxo-4,5-dihydro-2-furylacetate: step 1/1. The protein is 3-oxoadipate enol-lactonase 1 (pcaD) of Acinetobacter baylyi (strain ATCC 33305 / BD413 / ADP1).